Reading from the N-terminus, the 451-residue chain is Uronate isomerase (451 aa).

It belongs to the metallo-dependent hydrolases superfamily. Uronate isomerase family.

The enzyme catalyses D-glucuronate = D-fructuronate. It carries out the reaction aldehydo-D-galacturonate = keto-D-tagaturonate. It functions in the pathway carbohydrate metabolism; pentose and glucuronate interconversion. This Thermotoga neapolitana (strain ATCC 49049 / DSM 4359 / NBRC 107923 / NS-E) protein is Uronate isomerase.